A 264-amino-acid chain; its full sequence is Thymidylate synthase (264 aa).

R21 serves as a coordination point for dUMP. A (6R)-5,10-methylene-5,6,7,8-tetrahydrofolate-binding site is contributed by H51. Residue 126–127 (RR) participates in dUMP binding. C146 serves as the catalytic Nucleophile. DUMP-binding positions include 166–169 (RSAD), N177, and 207–209 (HLY). D169 serves as a coordination point for (6R)-5,10-methylene-5,6,7,8-tetrahydrofolate. A263 lines the (6R)-5,10-methylene-5,6,7,8-tetrahydrofolate pocket.

This sequence belongs to the thymidylate synthase family. Bacterial-type ThyA subfamily. In terms of assembly, homodimer.

Its subcellular location is the cytoplasm. It carries out the reaction dUMP + (6R)-5,10-methylene-5,6,7,8-tetrahydrofolate = 7,8-dihydrofolate + dTMP. It functions in the pathway pyrimidine metabolism; dTTP biosynthesis. In terms of biological role, catalyzes the reductive methylation of 2'-deoxyuridine-5'-monophosphate (dUMP) to 2'-deoxythymidine-5'-monophosphate (dTMP) while utilizing 5,10-methylenetetrahydrofolate (mTHF) as the methyl donor and reductant in the reaction, yielding dihydrofolate (DHF) as a by-product. This enzymatic reaction provides an intracellular de novo source of dTMP, an essential precursor for DNA biosynthesis. The polypeptide is Thymidylate synthase (Bartonella bacilliformis (strain ATCC 35685 / KC583 / Herrer 020/F12,63)).